We begin with the raw amino-acid sequence, 416 residues long: Mitochondrial inner membrane i-AAA protease complex subunit MGR1 (416 aa).

A disordered region spans residues 1–28 (MAVFTPPSGNSNSTDHTHTQDDHDKDDN). Topologically, residues 1 to 56 (MAVFTPPSGNSNSTDHTHTQDDHDKDDNDIKKFYIRPSLGLKLWGPLVPAPDNLPG) are mitochondrial intermembrane. A compositionally biased stretch (basic and acidic residues) spans 15 to 28 (DHTHTQDDHDKDDN). A helical membrane pass occupies residues 57 to 73 (LYTLITIQSAVGFFALW). The Mitochondrial matrix portion of the chain corresponds to 74–151 (RLRRLYKLPP…RQSRFVSVRK (78 aa)). A helical membrane pass occupies residues 152–169 (LLWGLFGSLLLSQSLLEL). Topologically, residues 170 to 416 (TRLNFLKYDP…PKALTNEKTH (247 aa)) are mitochondrial intermembrane. Residues 390-400 (SHTKTPTSTDQ) are compositionally biased toward polar residues. The disordered stretch occupies residues 390–416 (SHTKTPTSTDQPLPGPTPKALTNEKTH).

The protein belongs to the MGR1 family. In terms of assembly, component of the mitochondrial inner membrane i-AAA protease complex composed of at least MRG1 and YME1. Interacts directly with YME1.

The protein localises to the mitochondrion inner membrane. Its function is as follows. Component of the mitochondrial inner membrane i-AAA protease complex required for mitochondrial inner membrane protein turnover. Required for growth of cells lacking the mitochondrial genome. The protein is Mitochondrial inner membrane i-AAA protease complex subunit MGR1 (MGR1) of Saccharomyces cerevisiae (strain YJM789) (Baker's yeast).